We begin with the raw amino-acid sequence, 205 residues long: Purine catabolism protein PucB (205 aa).

Its pathway is purine metabolism; hypoxanthine degradation. In terms of biological role, required for xanthine dehydrogenase activity. Could be involved in formation of the molybdenum cofactor required by xanthine dehydrogenase. The protein is Purine catabolism protein PucB (pucB) of Bacillus subtilis (strain 168).